The primary structure comprises 352 residues: Isopentenyl-diphosphate delta-isomerase (352 aa).

Arg6–Lys7 contacts substrate. Residues Ala63–Thr65, Ser93, and Asn122 each bind FMN. Ser93 to Arg95 contacts substrate. Gln160 contacts substrate. Residue Glu161 participates in Mg(2+) binding. Residues Lys192, Thr221, Gly271–Arg273, and Ser292–Gln293 contribute to the FMN site.

Belongs to the IPP isomerase type 2 family. In terms of assembly, homooctamer. Dimer of tetramers. It depends on FMN as a cofactor. NADPH is required as a cofactor. The cofactor is Mg(2+).

It is found in the cytoplasm. It carries out the reaction isopentenyl diphosphate = dimethylallyl diphosphate. Involved in the biosynthesis of isoprenoids. Catalyzes the 1,3-allylic rearrangement of the homoallylic substrate isopentenyl (IPP) to its allylic isomer, dimethylallyl diphosphate (DMAPP). The sequence is that of Isopentenyl-diphosphate delta-isomerase from Pyrobaculum aerophilum (strain ATCC 51768 / DSM 7523 / JCM 9630 / CIP 104966 / NBRC 100827 / IM2).